We begin with the raw amino-acid sequence, 328 residues long: Malate dehydrogenase (328 aa).

11 to 17 (GAAGQIG) contributes to the NAD(+) binding site. Arginine 94 and arginine 100 together coordinate substrate. Residues asparagine 107, glutamine 114, and 131 to 133 (VGN) each bind NAD(+). Substrate is bound by residues asparagine 133 and arginine 164. The active-site Proton acceptor is histidine 189.

It belongs to the LDH/MDH superfamily. MDH type 2 family.

It catalyses the reaction (S)-malate + NAD(+) = oxaloacetate + NADH + H(+). Functionally, catalyzes the reversible oxidation of malate to oxaloacetate. This is Malate dehydrogenase from Acinetobacter baumannii (strain SDF).